We begin with the raw amino-acid sequence, 249 residues long: DNA polymerase sliding clamp (249 aa).

This sequence belongs to the PCNA family. As to quaternary structure, the subunits circularize to form a toroid; DNA passes through its center. Replication factor C (RFC) is required to load the toroid on the DNA. Homotrimer. Interacts with NucS.

Its function is as follows. Sliding clamp subunit that acts as a moving platform for DNA processing. Responsible for tethering the catalytic subunit of DNA polymerase and other proteins to DNA during high-speed replication. Regulates activity of NucS endonuclease and prevents non-specific cleavage. The protein is DNA polymerase sliding clamp of Pyrococcus abyssi (strain GE5 / Orsay).